The chain runs to 519 residues: Putative lipase ATG15 (519 aa).

The Cytoplasmic portion of the chain corresponds to 1-5 (MYIPG). Residues 6-26 (PLRLSSYLLPFLSSPSPPAQS) traverse the membrane as a helical; Signal-anchor for type II membrane protein segment. Residues 27-519 (SPDTRTISFK…CYKWEFGEWN (493 aa)) lie on the Lumenal side of the membrane. Asn-48, Asn-133, Asn-196, Asn-220, Asn-302, and Asn-309 each carry an N-linked (GlcNAc...) asparagine glycan. Catalysis depends on Ser-318, which acts as the Charge relay system. Asn-361 carries an N-linked (GlcNAc...) asparagine glycan. The tract at residues 481–502 (RRGPKRQPGGEDPKHGGVPKPV) is disordered.

Belongs to the AB hydrolase superfamily. Lipase family. In terms of assembly, binds to both phosphatidylinositol (PI) and phosphatidylinositol 3,5-bisphosphate (PIP2).

The protein resides in the endosome. It localises to the multivesicular body membrane. It is found in the prevacuolar compartment membrane. It catalyses the reaction a triacylglycerol + H2O = a diacylglycerol + a fatty acid + H(+). In terms of biological role, lipase which is essential for lysis of subvacuolar cytoplasm to vacuole targeted bodies and intravacuolar autophagic bodies. Involved in the lysis of intravacuolar multivesicular body (MVB) vesicles. The intravacuolar membrane disintegration by ATG15 is critical to life span extension. The sequence is that of Putative lipase ATG15 (ATG15) from Cryptococcus neoformans var. neoformans serotype D (strain B-3501A) (Filobasidiella neoformans).